Reading from the N-terminus, the 309-residue chain is tRNA pseudouridine synthase B (309 aa).

The Nucleophile role is filled by D39.

Belongs to the pseudouridine synthase TruB family. Type 1 subfamily.

It catalyses the reaction uridine(55) in tRNA = pseudouridine(55) in tRNA. Functionally, responsible for synthesis of pseudouridine from uracil-55 in the psi GC loop of transfer RNAs. The sequence is that of tRNA pseudouridine synthase B from Bacillus licheniformis (strain ATCC 14580 / DSM 13 / JCM 2505 / CCUG 7422 / NBRC 12200 / NCIMB 9375 / NCTC 10341 / NRRL NRS-1264 / Gibson 46).